A 535-amino-acid chain; its full sequence is Probable C4-dicarboxylate sensor kinase (535 aa).

The Cytoplasmic portion of the chain corresponds to 1–11 (MNKKKLSIRWK). Residues 12 to 32 (ITILSYILVIFSFLIGGIVLI) form a helical membrane-spanning segment. Over 33–172 (GNIQHTEERE…IADILLHLKR (140 aa)) the chain is Extracellular. The chain crosses the membrane as a helical span at residues 173 to 193 (DIAFIVVLTLGFGLAGSFLLA). Topologically, residues 194–535 (RHIKKQMFQL…MKGEEAQHGS (342 aa)) are cytoplasmic. Residues 213–276 (EERTATFHSM…PEIVERNKAV (64 aa)) enclose the PAS domain. The region spanning 333-528 (VQNHEHMNKL…SFSIVFPMKG (196 aa)) is the Histidine kinase domain. H336 carries the phosphohistidine; by autocatalysis modification.

It is found in the cell membrane. It catalyses the reaction ATP + protein L-histidine = ADP + protein N-phospho-L-histidine.. Its function is as follows. Member of the two-component regulatory system DctS/DctR. Probably activates DctR by phosphorylation. Essential for expression of dctP. The chain is Probable C4-dicarboxylate sensor kinase (dctS) from Bacillus subtilis (strain 168).